A 501-amino-acid chain; its full sequence is Glycerol kinase (501 aa).

Residue T12 coordinates ADP. ATP contacts are provided by T12, T13, and S14. T12 is a sn-glycerol 3-phosphate binding site. ADP is bound at residue R16. Positions 82, 83, 134, and 244 each coordinate sn-glycerol 3-phosphate. Glycerol contacts are provided by R82, E83, Y134, D244, and Q245. ADP-binding residues include T266 and G310. Positions 266, 310, 314, and 411 each coordinate ATP. G411 and N415 together coordinate ADP.

It belongs to the FGGY kinase family.

The catalysed reaction is glycerol + ATP = sn-glycerol 3-phosphate + ADP + H(+). It participates in polyol metabolism; glycerol degradation via glycerol kinase pathway; sn-glycerol 3-phosphate from glycerol: step 1/1. Its activity is regulated as follows. Inhibited by fructose 1,6-bisphosphate (FBP). Functionally, key enzyme in the regulation of glycerol uptake and metabolism. Catalyzes the phosphorylation of glycerol to yield sn-glycerol 3-phosphate. The polypeptide is Glycerol kinase (Methylorubrum extorquens (strain PA1) (Methylobacterium extorquens)).